Reading from the N-terminus, the 709-residue chain is Heme/hemopexin utilization protein C (709 aa).

The signal sequence occupies residues 1–21 (MRFSKLSLAITTTLVTANALA). The region spanning 36-147 (DPSRFTYTPQ…LGGVVAMRTP (112 aa)) is the TBDR plug domain. A TBDR beta-barrel domain is found at 158-709 (KFGVKIRQGY…NAKISAVYSF (552 aa)). The TonB C-terminal box signature appears at 692 to 709 (SLMEGTGRNAKISAVYSF).

It belongs to the TonB-dependent receptor family.

The protein localises to the cell outer membrane. Required for utilization of free heme at low concentrations. The polypeptide is Heme/hemopexin utilization protein C (hxuC) (Haemophilus influenzae (strain 86-028NP)).